The following is a 512-amino-acid chain: Ribose import ATP-binding protein RbsA 2 (512 aa).

ABC transporter domains lie at 22 to 258 and 263 to 512; these read LEMR…VGRD and FPKV…TGNA. 54 to 61 is a binding site for ATP; that stretch reads GENGAGKS.

Belongs to the ABC transporter superfamily. Ribose importer (TC 3.A.1.2.1) family. The complex is composed of an ATP-binding protein (RbsA), two transmembrane proteins (RbsC) and a solute-binding protein (RbsB).

It is found in the cell inner membrane. The enzyme catalyses D-ribose(out) + ATP + H2O = D-ribose(in) + ADP + phosphate + H(+). In terms of biological role, part of the ABC transporter complex RbsABC involved in ribose import. Responsible for energy coupling to the transport system. The sequence is that of Ribose import ATP-binding protein RbsA 2 from Rhizobium johnstonii (strain DSM 114642 / LMG 32736 / 3841) (Rhizobium leguminosarum bv. viciae).